Here is a 397-residue protein sequence, read N- to C-terminus: Succinyl-diaminopimelate desuccinylase (397 aa).

His74 contributes to the Zn(2+) binding site. The active site involves Asp76. Position 107 (Asp107) interacts with Zn(2+). The Proton acceptor role is filled by Glu141. 3 residues coordinate Zn(2+): Glu142, Glu170, and His368.

Belongs to the peptidase M20A family. DapE subfamily. Homodimer. The cofactor is Zn(2+). Co(2+) serves as cofactor.

The enzyme catalyses N-succinyl-(2S,6S)-2,6-diaminopimelate + H2O = (2S,6S)-2,6-diaminopimelate + succinate. It functions in the pathway amino-acid biosynthesis; L-lysine biosynthesis via DAP pathway; LL-2,6-diaminopimelate from (S)-tetrahydrodipicolinate (succinylase route): step 3/3. Catalyzes the hydrolysis of N-succinyl-L,L-diaminopimelic acid (SDAP), forming succinate and LL-2,6-diaminopimelate (DAP), an intermediate involved in the bacterial biosynthesis of lysine and meso-diaminopimelic acid, an essential component of bacterial cell walls. The protein is Succinyl-diaminopimelate desuccinylase of Mesorhizobium japonicum (strain LMG 29417 / CECT 9101 / MAFF 303099) (Mesorhizobium loti (strain MAFF 303099)).